Reading from the N-terminus, the 109-residue chain is Aquaporin-2 (109 aa).

The Cytoplasmic segment spans residues 1 to 6 (SIAFSR). Residues 7 to 27 (AVLAEFLATLLFVFFGLGSAL) form a helical membrane-spanning segment. The Extracellular segment spans residues 28 to 35 (NWPQAMPS). Residues 36–54 (VLQIAMAFGLAIGTLVQAL) form a helical membrane-spanning segment. The Cytoplasmic segment spans residues 55–59 (GHVSG). The discontinuously helical intramembrane region spans 60–69 (AHINPAVTVA). The short motif at 63–65 (NPA) is the NPA 1 element. The Cytoplasmic segment spans residues 70 to 80 (CLVGCHVSFLR). A helical membrane pass occupies residues 81 to 102 (AAFYVAAQLLGAVAGAALLHEI). At 103 to 109 (TPPDIRR) the chain is on the extracellular side.

This sequence belongs to the MIP/aquaporin (TC 1.A.8) family. In terms of assembly, homotetramer. Serine phosphorylation is necessary and sufficient for expression at the apical membrane. Endocytosis is not phosphorylation-dependent. In terms of processing, N-glycosylated.

It localises to the apical cell membrane. The protein resides in the basolateral cell membrane. Its subcellular location is the cell membrane. It is found in the cytoplasmic vesicle membrane. The protein localises to the golgi apparatus. It localises to the trans-Golgi network membrane. The catalysed reaction is H2O(in) = H2O(out). It carries out the reaction glycerol(in) = glycerol(out). Functionally, forms a water-specific channel that provides the plasma membranes of renal collecting duct with high permeability to water, thereby permitting water to move in the direction of an osmotic gradient. Plays an essential role in renal water homeostasis. Could also be permeable to glycerol. This Equus caballus (Horse) protein is Aquaporin-2.